Consider the following 411-residue polypeptide: F-box/kelch-repeat protein At3g61590 (411 aa).

The 47-residue stretch at 37 to 83 (FSMDSLLPDDLLERILSFLPIASIFRAGTVCKRWNEIVSSRRFLCNF) folds into the F-box domain. Kelch repeat units follow at residues 81 to 135 (CNFS…SSCG), 137 to 178 (VCFM…MSTS), 196 to 246 (SIVK…ICNN), 251 to 299 (MIYS…LMNL), 302 to 350 (RLVI…EFDE), and 352 to 401 (FASS…FTGF).

Part of a SCF (ASK-cullin-F-box) protein ligase complex. Interacts with SKP1A/ASK1, SKP1B/ASK2, ASK3, ASK9, ASK11, ASK12, ASK13, ASK14, ASK16 and ASK18.

Its pathway is protein modification; protein ubiquitination. Component of SCF(ASK-cullin-F-box) E3 ubiquitin ligase complexes, which may mediate the ubiquitination and subsequent proteasomal degradation of target proteins. The polypeptide is F-box/kelch-repeat protein At3g61590 (Arabidopsis thaliana (Mouse-ear cress)).